Consider the following 665-residue polypeptide: Probable protein transport Sec1a (665 aa).

The tract at residues 543 to 594 (PSPSFRGIPSASTQTSPAHQPAQSMRSRRTGGTWARPRDSDDGYSSDSVLKH) is disordered. Polar residues-rich tracts occupy residues 552-567 (SASTQTSPAHQPAQSM) and 585-594 (GYSSDSVLKH).

Belongs to the STXBP/unc-18/SEC1 family.

Functionally, involved in the vesicle trafficking. Binds syntaxins. The protein is Probable protein transport Sec1a of Oryza sativa subsp. japonica (Rice).